Here is a 397-residue protein sequence, read N- to C-terminus: MSKLDSLFTAALEQAAQRQVRRRLRHAAATPPGRLALDGRTLVNFSSNDYLGLARHPLLAERASLWATRHGAGAQASRLVCGNLDLHEQVEAKLARLKGTEAALLLASGWQANAAVLPALFKAAAAQGEPQVYTDRLNHASLHHGCQAAGVRQIRFRHNDLAHLEHLLAERAGAPGARFIVTESVFSMDGDRADVPALAALAARHHAFLYLDEAHATGVLGPRGMGLAGLAPGGVDLAMGTFSKGLGSFGAYVAGSRALCDYLVNACSGFIYTTALPPAVLGAIDAALDLVPRLDQARATLQGHGERLRASLAAQGIDCGASSTQIVPAIIGDAGHALALAAELERRGLLAVAIRPPTVPAGTSRLRIALSAAHGEAELDQLIEALAAGWRAVRQAA.

A substrate-binding site is contributed by Arg22. Position 109 to 110 (109 to 110 (GW)) interacts with pyridoxal 5'-phosphate. Position 139 (His139) interacts with substrate. Residues Ser187, 212–215 (DEAH), and 241–244 (TFSK) contribute to the pyridoxal 5'-phosphate site. Lys244 is subject to N6-(pyridoxal phosphate)lysine. A substrate-binding site is contributed by Thr358.

This sequence belongs to the class-II pyridoxal-phosphate-dependent aminotransferase family. BioF subfamily. Homodimer. The cofactor is pyridoxal 5'-phosphate.

The enzyme catalyses 6-carboxyhexanoyl-[ACP] + L-alanine + H(+) = (8S)-8-amino-7-oxononanoate + holo-[ACP] + CO2. It participates in cofactor biosynthesis; biotin biosynthesis. Catalyzes the decarboxylative condensation of pimeloyl-[acyl-carrier protein] and L-alanine to produce 8-amino-7-oxononanoate (AON), [acyl-carrier protein], and carbon dioxide. In Bordetella pertussis (strain Tohama I / ATCC BAA-589 / NCTC 13251), this protein is Putative 8-amino-7-oxononanoate synthase (bioF).